Consider the following 896-residue polypeptide: Protein translocase subunit SecA (896 aa).

Residues glutamine 87, 105–109 (GEGKT), and aspartate 512 each bind ATP. The interval 858–886 (RAGGEAEAAKPVVRDEKKVGRNDPCPCGS) is disordered. The segment covering 869–878 (VVRDEKKVGR) has biased composition (basic and acidic residues). Residues cysteine 882, cysteine 884, cysteine 893, and cysteine 894 each contribute to the Zn(2+) site.

The protein belongs to the SecA family. As to quaternary structure, monomer and homodimer. Part of the essential Sec protein translocation apparatus which comprises SecA, SecYEG and auxiliary proteins SecDF-YajC and YidC. Zn(2+) is required as a cofactor.

The protein localises to the cell inner membrane. The protein resides in the cytoplasm. It catalyses the reaction ATP + H2O + cellular proteinSide 1 = ADP + phosphate + cellular proteinSide 2.. Its function is as follows. Part of the Sec protein translocase complex. Interacts with the SecYEG preprotein conducting channel. Has a central role in coupling the hydrolysis of ATP to the transfer of proteins into and across the cell membrane, serving as an ATP-driven molecular motor driving the stepwise translocation of polypeptide chains across the membrane. This Syntrophotalea carbinolica (strain DSM 2380 / NBRC 103641 / GraBd1) (Pelobacter carbinolicus) protein is Protein translocase subunit SecA.